The sequence spans 501 residues: Aldehyde dehydrogenase, cytosolic 1 (501 aa).

At S2 the chain carries N-acetylserine. Residues K91 and K128 each carry the N6-acetyllysine modification. 246-251 serves as a coordination point for NAD(+); sequence GSTEVG. K252 is modified (N6-acetyllysine). The Proton acceptor role is filled by E269. Catalysis depends on C303, which acts as the Nucleophile. Residues K353, K367, and K410 each carry the N6-acetyllysine modification. S413 carries the phosphoserine modification. N6-acetyllysine is present on residues K419 and K435.

Belongs to the aldehyde dehydrogenase family. In terms of assembly, homotetramer. In terms of tissue distribution, highest level in liver, high level in lung, low level in kidney and testis.

It is found in the cytoplasm. It carries out the reaction an aldehyde + NAD(+) + H2O = a carboxylate + NADH + 2 H(+). It functions in the pathway alcohol metabolism; ethanol degradation; acetate from ethanol: step 2/2. Its function is as follows. Can oxidize benzaldehyde, propionaldehyde and acetaldehyde. No detectable activity with retinal. The sequence is that of Aldehyde dehydrogenase, cytosolic 1 from Mus musculus (Mouse).